Here is a 523-residue protein sequence, read N- to C-terminus: Maintenance of mitochondrial morphology protein 1 (523 aa).

Residues 1–43 (MAGSTSASLQTPYFPSSTQINPVRVDHTLPLPPAQPSLSFTQG) lie on the Lumenal side of the membrane. The chain crosses the membrane as a helical span at residues 44 to 64 (LLVGQLSVVLLIGAFIKFFIF). Over 65-523 (GEAPPPPSRG…GSMPDTVTET (459 aa)) the chain is Cytoplasmic. Disordered stretches follow at residues 70-118 (PPSR…SSST), 295-349 (TSDQ…SKHG), 420-473 (RTGL…IDRG), and 492-523 (GGHQ…VTET). 3 stretches are compositionally biased toward polar residues: residues 74–96 (GLSN…TDSS), 105–118 (STSN…SSST), and 295–312 (TSDQ…TTSE). An SMP-LTD domain is found at 151 to 412 (QPESLDWFNV…EPRVQVVGLP (262 aa)). Residues 449-467 (GVSGGGGSGGGSGGGGGSM) show a composition bias toward gly residues.

The protein belongs to the MMM1 family. Homodimer. Component of the ER-mitochondria encounter structure (ERMES) or MDM complex, composed of MMM1, MDM10, MDM12 and MDM34. An MMM1 homodimer associates with one molecule of MDM12 on each side in a pairwise head-to-tail manner, and the SMP-LTD domains of MMM1 and MDM12 generate a continuous hydrophobic tunnel for phospholipid trafficking.

It localises to the endoplasmic reticulum membrane. Functionally, component of the ERMES/MDM complex, which serves as a molecular tether to connect the endoplasmic reticulum (ER) and mitochondria. Components of this complex are involved in the control of mitochondrial shape and protein biogenesis, and function in nonvesicular lipid trafficking between the ER and mitochondria. The MDM12-MMM1 subcomplex functions in the major beta-barrel assembly pathway that is responsible for biogenesis of all outer membrane beta-barrel proteins, and acts in a late step after the SAM complex. The MDM10-MDM12-MMM1 subcomplex further acts in the TOM40-specific pathway after the action of the MDM12-MMM1 complex. Essential for establishing and maintaining the structure of mitochondria and maintenance of mtDNA nucleoids. The protein is Maintenance of mitochondrial morphology protein 1 of Paracoccidioides brasiliensis (strain Pb03).